The chain runs to 737 residues: Cellulose synthase-like protein E1 (737 aa).

Helical transmembrane passes span 26-45 (AVYRVQAATVAAGILLVLYY) and 58-78 (AAWLGMAAAELWFAVYWVIAQ). Active-site residues include Asp-146 and Asp-451. 5 consecutive transmembrane segments (helical) span residues 528–548 (LWAANSLPTLYYVVIPSLGLV), 551–571 (TPLFPQIMSPWATPFIYVFCV), 654–674 (VIIATVALLNFVCLVGGLSQI), 683–703 (WNVFLPQAILCGMIVIINMPI), and 716–736 (IPTAVTLASIGFVMLAFLVPI).

This sequence belongs to the glycosyltransferase 2 family. Plant cellulose synthase-like E subfamily.

It localises to the golgi apparatus membrane. Functionally, thought to be a Golgi-localized beta-glycan synthase that polymerize the backbones of noncellulosic polysaccharides (hemicelluloses) of plant cell wall. The polypeptide is Cellulose synthase-like protein E1 (CSLE1) (Oryza sativa subsp. japonica (Rice)).